We begin with the raw amino-acid sequence, 427 residues long: Endothelin-1 receptor (427 aa).

The N-terminal stretch at 1 to 20 (METFWLRVSFWVALVGGVIS) is a signal peptide. Over 21–80 (DNPESYSTNLSIHVDSVTTFRGTELSFVVTTHQPTNLALPSNGSMHNYCPQQTKITSAFK) the chain is Extracellular. Residues N29 and N62 are each glycosylated (N-linked (GlcNAc...) asparagine). The chain crosses the membrane as a helical span at residues 81 to 102 (YINTVISCTIFIVGMVGNATLL). At 103 to 112 (RIIYQNKCMR) the chain is on the cytoplasmic side. A helical membrane pass occupies residues 113–132 (NGPNALIASLALGDLIYVVI). The Extracellular segment spans residues 133–159 (DLPINVFKLLAGRWPFEQNDFGVFLCK). A disulfide bridge links C158 with C239. The helical transmembrane segment at 160-181 (LFPFLQKSSVGITVLNLCALSV) threads the bilayer. Residues 182-205 (DRYRAVASWSRVQGIGIPLVTAIE) are Cytoplasmic-facing. Residues 206-229 (IVSIWILSFILAIPEAIGFVMVPF) form a helical membrane-spanning segment. Residues 230 to 256 (EYKGAQHRTCMLNATSKFMEFYQDVKD) lie on the Extracellular side of the membrane. Residues 257 to 278 (WWLFGFYFCMPLVCTAIFYTLM) traverse the membrane as a helical segment. Residues 279–306 (TCEMLNRRNGSLRIALSEHLKQRREVAK) lie on the Cytoplasmic side of the membrane. The chain crosses the membrane as a helical span at residues 307–328 (TVFCLVVIFALCWFPLHLSRIL). The Extracellular segment spans residues 329 to 347 (KKTVYDEMDTNRCELLSFL). Residues 348–372 (LLMDYIGINLATMNSCINPIALYFV) traverse the membrane as a helical segment. Topologically, residues 373–427 (SKKFKNCFQSCLCCCCYQSKSLMTSVPMNGTSIQWKNPEQNNHNTERSSHKDSIN) are cytoplasmic. Polar residues predominate over residues 405-415 (IQWKNPEQNNH). A disordered region spans residues 405-427 (IQWKNPEQNNHNTERSSHKDSIN). Residues 416 to 427 (NTERSSHKDSIN) are compositionally biased toward basic and acidic residues. At S425 the chain carries Phosphoserine.

The protein belongs to the G-protein coupled receptor 1 family. Endothelin receptor subfamily. EDNRA sub-subfamily. In terms of assembly, interacts with HDAC7 and KAT5.

Its subcellular location is the cell membrane. Receptor for endothelin-1. Mediates its action by association with G proteins that activate a phosphatidylinositol-calcium second messenger system. The rank order of binding affinities for ET-A is: ET1 &gt; ET2 &gt;&gt; ET3. The protein is Endothelin-1 receptor of Ovis aries (Sheep).